Consider the following 398-residue polypeptide: SEC12-like protein 1 (398 aa).

Residue Met1 is modified to N-acetylmethionine. The Cytoplasmic segment spans residues 1–337 (MEIEEASRES…TVPKEWKEWQ (337 aa)). WD repeat units lie at residues 71–110 (DSDG…TGIT), 120–159 (QNAG…VILD), 162–201 (KAHK…PLST), 252–291 (LSRK…IYHY), and 296–334 (HLGQ…KEWK). A helical membrane pass occupies residues 338-358 (IYALLFCLFMASVIAAYVFFE). The Lumenal segment spans residues 359–398 (NSDSFWKLPMGKDQKRPKISLFGGSSSTPSEDHSRWNLDL).

Ubiquitous with higher levels in flowers, roots and senescing leaves.

The protein resides in the endoplasmic reticulum membrane. Its function is as follows. Involved in Pi uptake by facilitating the trafficking of PHT1-1/PHT1;1 from the endoplasmic reticulum to the plasma membrane. The protein is SEC12-like protein 1 (PHF1) of Arabidopsis thaliana (Mouse-ear cress).